The chain runs to 347 residues: N-acetyl-gamma-glutamyl-phosphate reductase (347 aa).

Residue C152 is part of the active site.

It belongs to the NAGSA dehydrogenase family. Type 1 subfamily.

Its subcellular location is the cytoplasm. It catalyses the reaction N-acetyl-L-glutamate 5-semialdehyde + phosphate + NADP(+) = N-acetyl-L-glutamyl 5-phosphate + NADPH + H(+). Its pathway is amino-acid biosynthesis; L-arginine biosynthesis; N(2)-acetyl-L-ornithine from L-glutamate: step 3/4. In terms of biological role, catalyzes the NADPH-dependent reduction of N-acetyl-5-glutamyl phosphate to yield N-acetyl-L-glutamate 5-semialdehyde. This Neisseria gonorrhoeae (strain ATCC 700825 / FA 1090) protein is N-acetyl-gamma-glutamyl-phosphate reductase.